The sequence spans 366 residues: Histidinol-phosphate aminotransferase 2 (366 aa).

A compositionally biased stretch (polar residues) spans 1 to 11 (MQVKDQLSSLQ). Positions 1 to 21 (MQVKDQLSSLQPYKPGKSPEQ) are disordered. Position 222 is an N6-(pyridoxal phosphate)lysine (Lys222).

This sequence belongs to the class-II pyridoxal-phosphate-dependent aminotransferase family. Histidinol-phosphate aminotransferase subfamily. In terms of assembly, homodimer. Requires pyridoxal 5'-phosphate as cofactor.

It carries out the reaction L-histidinol phosphate + 2-oxoglutarate = 3-(imidazol-4-yl)-2-oxopropyl phosphate + L-glutamate. The protein operates within amino-acid biosynthesis; L-histidine biosynthesis; L-histidine from 5-phospho-alpha-D-ribose 1-diphosphate: step 7/9. This Bacillus cereus (strain ATCC 10987 / NRS 248) protein is Histidinol-phosphate aminotransferase 2.